A 294-amino-acid chain; its full sequence is MTFEGHACAFGAGTIINAIATWKGAAFGVDLKTFAEVSLFEGKSGIKGSIEGTPEGDTRLIEHCVELVLERFGLELEGTIITGSEIPLAGGLKSSSAAANASVLATLRAVGEILPPLEIVKLGVRAAKEVGVTVTGAFDDACASFLGGIVVTDNRKMELVRREEADSKVLIFAPSKKAFSADTNVKRSRLIAPYVEMAYELALKGEYERAMTLNGFLYCGALGFDTEYMLKALECGVTGVSLSGTGPSYAALVKAEQVKELKSAWESCGMEGKVIETSINNRDAISFKGRGSLE.

87–97 lines the ATP pocket; that stretch reads PLAGGLKSSSA.

This sequence belongs to the GHMP kinase family. Archaeal shikimate kinase subfamily.

The protein localises to the cytoplasm. The catalysed reaction is shikimate + ATP = 3-phosphoshikimate + ADP + H(+). It participates in metabolic intermediate biosynthesis; chorismate biosynthesis; chorismate from D-erythrose 4-phosphate and phosphoenolpyruvate: step 5/7. In Methanosarcina acetivorans (strain ATCC 35395 / DSM 2834 / JCM 12185 / C2A), this protein is Shikimate kinase (aroK).